Here is a 1538-residue protein sequence, read N- to C-terminus: CLIP-associating protein 1 (1538 aa).

HEAT repeat units follow at residues 87 to 124 and 163 to 200; these read AQIGTVLPSLIDRLGDAKDSVREQDQTLLLKIMDQAAN and LTLSKIVPHICNLLGDPNSQVRDAAINSLVEIYRHVGE. The interval 235–292 is disordered; sequence SANDKNFDDEDSVDGNRPSSASSTSSKAPPSSRRNVGMGTTRRLGSSTLGSKSSAAKE. Position 246 is a phosphoserine (Ser-246). Over residues 251-268 the composition is skewed to low complexity; sequence RPSSASSTSSKAPPSSRR. 2 HEAT repeats span residues 405–440 and 441–477; these read HGAEAIMPTIFNLIPNSAKIMATSGVVAVRLIIRHT and HIPRLIPVITSNCTSKSVAVRRRCFEFLDLLLQEWQT. Residues 543–783 are disordered; the sequence is SDSIVSLPQS…DRFGLGQPGR (241 aa). 5 positions are modified to phosphoserine: Ser-545, Ser-548, Ser-558, Ser-559, and Ser-568. Low complexity predominate over residues 548 to 567; that stretch reads SLPQSDRSSSSSQESLNRPL. Over residues 574-594 the composition is skewed to low complexity; it reads TGSTTSRASTVSTKSVSTTGS. Position 600 is a phosphoserine (Ser-600). Low complexity predominate over residues 606-628; the sequence is AAASAKSKVSSSSGTTPFSSAAA. Residues Ser-636, Ser-646, Ser-647, and Ser-649 each carry the phosphoserine modification. The segment covering 645-658 has biased composition (polar residues); the sequence is QSSGSATNVASTPD. Thr-656 bears the Phosphothreonine mark. Residues 662 to 785 are interaction with microtubules, MAPRE1 and MAPRE3; the sequence is RSRAKVVSQS…FGLGQPGRIP (124 aa). Residues 673–692 show a composition bias toward low complexity; it reads RSRSANPAGAGSRSSSPGKL. Residues Ser-684, Ser-688, Ser-695, and Ser-705 each carry the phosphoserine modification. A compositionally biased stretch (gly residues) spans 693-705; that stretch reads LGSGYGGLTGGSS. Position 711 is a phosphothreonine (Thr-711). Phosphoserine is present on Ser-714. Residues 724-733 are compositionally biased toward polar residues; it reads QGCSRETSPN. Ser-787, Ser-797, and Ser-823 each carry phosphoserine. One copy of the HEAT 5 repeat lies at 974 to 1011; sequence QQFNILMRFIVDQTQTPNLKVKVAILKYIESLARQMDP. Disordered stretches follow at residues 1080–1120 and 1136–1156; these read HLKN…CSHG and AKHPPPFSQPNSIPTAPSHKA. The segment covering 1082–1097 has biased composition (polar residues); it reads KNSSNTSVGSPSNTIG. Ser-1091 is subject to Phosphoserine. Phosphothreonine is present on residues Thr-1095 and Thr-1099. The segment covering 1106–1115 has biased composition (low complexity); sequence SRTSPLTSPT. The residue at position 1113 (Ser-1113) is a Phosphoserine. Residues Ser-1196 and Ser-1223 each carry the phosphoserine modification. Residues 1215 to 1238 form a disordered region; the sequence is VSRDGGAASPATEGRGGSEVEGGR. The interval 1254-1538 is interaction with CLIP2; sequence RAFPGPRARD…SSSSDVSTHS (285 aa). Residues 1254–1538 form an interaction with PHLDB2 and RSN region; sequence RAFPGPRARD…SSSSDVSTHS (285 aa). A localization to kinetochores region spans residues 1256 to 1538; that stretch reads FPGPRARDYN…SSSSDVSTHS (283 aa). The stretch at 1299–1330 forms a coiled coil; sequence DHSDLVADLLKELSNHNERVEERKGALLELLK. HEAT repeat units lie at residues 1342–1379 and 1460–1497; these read EHFKTILLLLLETLGDKDHSIRALALRVLREILRNQPA and QLLVDIIPGLLQGYDNTESSVRKASVFCLVAIYSVIGE.

It belongs to the CLASP family. As to quaternary structure, interacts with CLIP2, ERC1, MAPRE1, MAPRE3, microtubules, PHLDB2 and RSN. The interaction with ERC1 may be mediated by PHLDB2. Interacts with GCC2; recruits CLASP1 to Golgi membranes. Interacts with MACF1. Interacts with mtcl2 and MTCL1.

The protein resides in the cytoplasm. Its subcellular location is the cytoskeleton. It localises to the microtubule organizing center. It is found in the centrosome. The protein localises to the chromosome. The protein resides in the centromere. Its subcellular location is the kinetochore. It localises to the spindle. It is found in the golgi apparatus. The protein localises to the trans-Golgi network. Microtubule plus-end tracking protein that promotes the stabilization of dynamic microtubules. Involved in the nucleation of noncentrosomal microtubules originating from the trans-Golgi network (TGN). Required for the polarization of the cytoplasmic microtubule arrays in migrating cells towards the leading edge of the cell. May act at the cell cortex to enhance the frequency of rescue of depolymerizing microtubules by attaching their plus-ends to cortical platforms composed of ERC1 and PHLDB2. This cortical microtubule stabilizing activity is regulated at least in part by phosphatidylinositol 3-kinase signaling. Also performs a similar stabilizing function at the kinetochore which is essential for the bipolar alignment of chromosomes on the mitotic spindle. This is CLIP-associating protein 1 (CLASP1) from Homo sapiens (Human).